Reading from the N-terminus, the 430-residue chain is MELLKALLLLSGVFGALAEFCVIPRIDSQLVEKLGQRLLPWMDRLSSEQLNPSVFVGLRLSSMQAGTKEDLYLHSLKIHYQQCLLRSTSSDDNSSCQPKLSGGSLALYLLALRANCEFFGSRKGDRLISQLKWFLEDEKKAIGHNHEGHPNTNYYQYGLSILALCVHQKRLHDSVVGKLLYAVEHDYFTYQGHVSVDTEAMAGLALTCLERFNFNSDLRPRITMAIETVREKILKSQAPEGYFGNIYSTPLALQMLMTSPASGVGLGTACIKAGTSLLLSLQDGAFQNPLMISQLLPILNHKTYLDLIFPDCQASRVMLVPAVEDPVHISEVISVTLKVASALSPYEQTFFVFAGSSLEDVLKLAQDGGGFTYGTQASLSGPYLTSVLGKDAGDREYWQLLRAPDTPLLQGIADYKPQDGETIELRLVRW.

Residues 1–18 form the signal peptide; it reads MELLKALLLLSGVFGALA. Intrachain disulfides connect cysteine 21/cysteine 270, cysteine 116/cysteine 312, and cysteine 165/cysteine 208. Residues 152–156, histidine 193, 193–197, asparagine 245, serine 248, glutamine 294, and 398–400 each bind cob(II)alamin; these read TNYYQ, HVSVD, and WQL.

It belongs to the eukaryotic cobalamin transport proteins family. As to quaternary structure, interacts with CD320 (via LDL-receptor class A domains).

The protein localises to the secreted. Functionally, primary vitamin B12-binding and transport protein. Delivers cobalamin to cells. In Mus musculus (Mouse), this protein is Transcobalamin-2 (Tcn2).